A 386-amino-acid polypeptide reads, in one-letter code: uncharacterized protein (386 aa).

Transmembrane regions (helical) follow at residues 48–68 (NLIT…MLVY), 78–98 (PSWV…FDAI), 136–156 (LQLD…YFYI), 171–191 (YFSG…LTAI), 213–233 (FLPY…ALLL), 253–273 (VIKA…VFSL), 285–305 (FLTI…VVIV), 316–336 (WNVL…FGVL), and 344–364 (FFCY…HVIA).

The protein belongs to the CDP-alcohol phosphatidyltransferase class-I family.

It is found in the membrane. This is an uncharacterized protein from Schizosaccharomyces pombe (strain 972 / ATCC 24843) (Fission yeast).